An 869-amino-acid polypeptide reads, in one-letter code: Valine--tRNA ligase (869 aa).

Positions 47–57 (PYPTGNFHIGN) match the 'HIGH' region motif. The 'KMSKS' region signature appears at 521–525 (KMSKS). An ATP-binding site is contributed by Lys-524.

This sequence belongs to the class-I aminoacyl-tRNA synthetase family. ValS type 2 subfamily.

It is found in the cytoplasm. It catalyses the reaction tRNA(Val) + L-valine + ATP = L-valyl-tRNA(Val) + AMP + diphosphate. Functionally, catalyzes the attachment of valine to tRNA(Val). As ValRS can inadvertently accommodate and process structurally similar amino acids such as threonine, to avoid such errors, it has a 'posttransfer' editing activity that hydrolyzes mischarged Thr-tRNA(Val) in a tRNA-dependent manner. The polypeptide is Valine--tRNA ligase (Methanosarcina mazei (strain ATCC BAA-159 / DSM 3647 / Goe1 / Go1 / JCM 11833 / OCM 88) (Methanosarcina frisia)).